The primary structure comprises 401 residues: MNLDGNQASIREVCDAGLLSGAVTMVWQREKLLQVNEIGYRDIDAGVPMQRDTLFRIASMTKPVTVAAAMSLVDEGKLALRDPITRWAPELCKVAVLDDAAGPLDRTHPARRAILIEDLLTHTSGLAYGFSVSGPISRAYQRLPFGQGPDVWLAALATLPLVHQPGDRVTYSHAIDVLGVIVSRIEDAPLYQIIDERVLGPAGMTDTGFYVSADAQRRAATMYRLDEQDRLRHDVMGPPHVTPPSFCNAGGGLWSTADDYLRFVRMLLGDGTVDGVRVLSPESVRLMRTDRLTDEQKRHSFLGAPFWVGRGFGLNLSVVTDPAKSRPLFGPGGLGTFSWPGAYGTWWQADPSADLILLYLIQHCPDLSVDAAAAVAGNPSLAKLRTAQPKFVRRTYRALGL.

This is an uncharacterized protein from Mycobacterium tuberculosis (strain CDC 1551 / Oshkosh).